We begin with the raw amino-acid sequence, 92 residues long: Acylphosphatase (92 aa).

Residues Arg-6–Arg-92 form the Acylphosphatase-like domain. Catalysis depends on residues Arg-21 and Asn-39.

It belongs to the acylphosphatase family.

It carries out the reaction an acyl phosphate + H2O = a carboxylate + phosphate + H(+). This Natronomonas pharaonis (strain ATCC 35678 / DSM 2160 / CIP 103997 / JCM 8858 / NBRC 14720 / NCIMB 2260 / Gabara) (Halobacterium pharaonis) protein is Acylphosphatase (acyP).